We begin with the raw amino-acid sequence, 273 residues long: 3-methyl-2-oxobutanoate hydroxymethyltransferase (273 aa).

Mg(2+)-binding residues include D53 and D92. 3-methyl-2-oxobutanoate is bound by residues 53–54 (DS), D92, and K120. E122 lines the Mg(2+) pocket. E189 serves as the catalytic Proton acceptor.

This sequence belongs to the PanB family. As to quaternary structure, homodecamer; pentamer of dimers. Requires Mg(2+) as cofactor.

The protein localises to the cytoplasm. The catalysed reaction is 3-methyl-2-oxobutanoate + (6R)-5,10-methylene-5,6,7,8-tetrahydrofolate + H2O = 2-dehydropantoate + (6S)-5,6,7,8-tetrahydrofolate. It participates in cofactor biosynthesis; (R)-pantothenate biosynthesis; (R)-pantoate from 3-methyl-2-oxobutanoate: step 1/2. Functionally, catalyzes the reversible reaction in which hydroxymethyl group from 5,10-methylenetetrahydrofolate is transferred onto alpha-ketoisovalerate to form ketopantoate. This Cupriavidus taiwanensis (strain DSM 17343 / BCRC 17206 / CCUG 44338 / CIP 107171 / LMG 19424 / R1) (Ralstonia taiwanensis (strain LMG 19424)) protein is 3-methyl-2-oxobutanoate hydroxymethyltransferase.